Consider the following 364-residue polypeptide: N-acetyl-gamma-glutamyl-phosphate reductase (364 aa).

Residue C157 is part of the active site.

This sequence belongs to the NAGSA dehydrogenase family. Type 1 subfamily.

The protein localises to the cytoplasm. The enzyme catalyses N-acetyl-L-glutamate 5-semialdehyde + phosphate + NADP(+) = N-acetyl-L-glutamyl 5-phosphate + NADPH + H(+). Its pathway is amino-acid biosynthesis; L-arginine biosynthesis; N(2)-acetyl-L-ornithine from L-glutamate: step 3/4. Its function is as follows. Catalyzes the NADPH-dependent reduction of N-acetyl-5-glutamyl phosphate to yield N-acetyl-L-glutamate 5-semialdehyde. The protein is N-acetyl-gamma-glutamyl-phosphate reductase of Bifidobacterium longum (strain NCC 2705).